We begin with the raw amino-acid sequence, 310 residues long: tRNA dimethylallyltransferase (310 aa).

Position 13-20 (13-20 (GPTASGKT)) interacts with ATP. 15–20 (TASGKT) contacts substrate. Interaction with substrate tRNA regions lie at residues 38–41 (DSAL), 162–166 (QRLSR), 243–248 (RCVGYR), and 276–283 (KRQITWLR).

It belongs to the IPP transferase family. Monomer. Mg(2+) is required as a cofactor.

The enzyme catalyses adenosine(37) in tRNA + dimethylallyl diphosphate = N(6)-dimethylallyladenosine(37) in tRNA + diphosphate. Catalyzes the transfer of a dimethylallyl group onto the adenine at position 37 in tRNAs that read codons beginning with uridine, leading to the formation of N6-(dimethylallyl)adenosine (i(6)A). This chain is tRNA dimethylallyltransferase, found in Vibrio campbellii (strain ATCC BAA-1116).